We begin with the raw amino-acid sequence, 157 residues long: Endoribonuclease YbeY (157 aa).

Positions 123, 127, and 133 each coordinate Zn(2+).

This sequence belongs to the endoribonuclease YbeY family. Requires Zn(2+) as cofactor.

Its subcellular location is the cytoplasm. Its function is as follows. Single strand-specific metallo-endoribonuclease involved in late-stage 70S ribosome quality control and in maturation of the 3' terminus of the 16S rRNA. In Limosilactobacillus fermentum (strain NBRC 3956 / LMG 18251) (Lactobacillus fermentum), this protein is Endoribonuclease YbeY.